We begin with the raw amino-acid sequence, 366 residues long: Protein RecA (366 aa).

77–84 contacts ATP; that stretch reads GPESSGKT. The interval 346 to 366 is disordered; that stretch reads IGGPGGEDDDAGGAAGVGDEA.

The protein belongs to the RecA family.

The protein localises to the cytoplasm. In terms of biological role, can catalyze the hydrolysis of ATP in the presence of single-stranded DNA, the ATP-dependent uptake of single-stranded DNA by duplex DNA, and the ATP-dependent hybridization of homologous single-stranded DNAs. It interacts with LexA causing its activation and leading to its autocatalytic cleavage. This is Protein RecA from Rhodospirillum rubrum (strain ATCC 11170 / ATH 1.1.1 / DSM 467 / LMG 4362 / NCIMB 8255 / S1).